We begin with the raw amino-acid sequence, 250 residues long: Acetylglutamate kinase (250 aa).

Substrate is bound by residues 41-42 (GG), Arg-63, and Asn-156.

Belongs to the acetylglutamate kinase family. ArgB subfamily.

It localises to the cytoplasm. It catalyses the reaction N-acetyl-L-glutamate + ATP = N-acetyl-L-glutamyl 5-phosphate + ADP. It participates in amino-acid biosynthesis; L-arginine biosynthesis; N(2)-acetyl-L-ornithine from L-glutamate: step 2/4. Catalyzes the ATP-dependent phosphorylation of N-acetyl-L-glutamate. The sequence is that of Acetylglutamate kinase from Listeria monocytogenes serotype 4a (strain HCC23).